The chain runs to 72 residues: Putative membrane protein insertion efficiency factor (72 aa).

Belongs to the UPF0161 family.

It localises to the cell inner membrane. Functionally, could be involved in insertion of integral membrane proteins into the membrane. The protein is Putative membrane protein insertion efficiency factor of Myxococcus xanthus (strain DK1622).